Consider the following 138-residue polypeptide: Large ribosomal subunit protein bL19 (138 aa).

Belongs to the bacterial ribosomal protein bL19 family.

Functionally, this protein is located at the 30S-50S ribosomal subunit interface and may play a role in the structure and function of the aminoacyl-tRNA binding site. In Rickettsia prowazekii (strain Madrid E), this protein is Large ribosomal subunit protein bL19 (rplS).